We begin with the raw amino-acid sequence, 485 residues long: Glutamate--tRNA ligase 2 (485 aa).

The 'HIGH' region signature appears at 10-20; sequence PSPTGPIHIGN. A 'KMSKS' region motif is present at residues 252-256; that stretch reads KLSKR. Lysine 255 lines the ATP pocket.

This sequence belongs to the class-I aminoacyl-tRNA synthetase family. Glutamate--tRNA ligase type 1 subfamily. In terms of assembly, monomer.

It is found in the cytoplasm. The enzyme catalyses tRNA(Glu) + L-glutamate + ATP = L-glutamyl-tRNA(Glu) + AMP + diphosphate. Catalyzes the attachment of glutamate to tRNA(Glu) in a two-step reaction: glutamate is first activated by ATP to form Glu-AMP and then transferred to the acceptor end of tRNA(Glu). This Caldanaerobacter subterraneus subsp. tengcongensis (strain DSM 15242 / JCM 11007 / NBRC 100824 / MB4) (Thermoanaerobacter tengcongensis) protein is Glutamate--tRNA ligase 2.